Consider the following 254-residue polypeptide: Glucosamine-6-phosphate deaminase (254 aa).

D63 functions as the Proton acceptor; for enolization step in the catalytic mechanism. N129 serves as the catalytic For ring-opening step. Catalysis depends on H131, which acts as the Proton acceptor; for ring-opening step. Residue E136 is the For ring-opening step of the active site.

It belongs to the glucosamine/galactosamine-6-phosphate isomerase family. NagB subfamily.

The catalysed reaction is alpha-D-glucosamine 6-phosphate + H2O = beta-D-fructose 6-phosphate + NH4(+). It functions in the pathway amino-sugar metabolism; N-acetylneuraminate degradation; D-fructose 6-phosphate from N-acetylneuraminate: step 5/5. Catalyzes the reversible isomerization-deamination of glucosamine 6-phosphate (GlcN6P) to form fructose 6-phosphate (Fru6P) and ammonium ion. The protein is Glucosamine-6-phosphate deaminase of Exiguobacterium sp. (strain ATCC BAA-1283 / AT1b).